The chain runs to 88 residues: Small ribosomal subunit protein bS16c (88 aa).

Belongs to the bacterial ribosomal protein bS16 family.

It localises to the plastid. The protein localises to the chloroplast. The polypeptide is Small ribosomal subunit protein bS16c (Lactuca sativa (Garden lettuce)).